A 189-amino-acid chain; its full sequence is Heme-binding protein 1 (189 aa).

This sequence belongs to the HEBP family. Monomer.

It is found in the cytoplasm. Functionally, may bind free porphyrinogens that may be present in the cell and thus facilitate removal of these potentially toxic compound. Binds with a high affinity to one molecule of heme or porphyrins. It binds metalloporphyrins, free porphyrins and N-methylprotoporphyrin with similar affinities. The protein is Heme-binding protein 1 (HEBP1) of Sus scrofa (Pig).